The following is a 775-amino-acid chain: DENN domain-containing protein 1B (775 aa).

The region spanning 14–143 (DLVLKVKCHA…YNHPVPKANT (130 aa)) is the uDENN domain. The cDENN domain occupies 180–316 (GLPTIPESRN…VVSALKNKLK (137 aa)). Residues 318–395 (QSTATGDGVA…DGRLAKLNAG (78 aa)) form the dDENN domain. Residues 398–402 (FSDVF) carry the FXDXF motif motif. The residue at position 520 (Y520) is a Phosphotyrosine. Phosphoserine occurs at positions 535, 536, 549, and 552. A Clathrin box motif is present at residues 566 to 575 (DLLGEILDTL). Disordered stretches follow at residues 635 to 654 (DSAL…VSSS) and 671 to 706 (HLGA…KRET). The span at 639 to 651 (HGKHLPPSPRKRV) shows a compositional bias: basic residues. Phosphoserine occurs at positions 652 and 653. Over residues 695 to 706 (QTDKGKTEKRET) the composition is skewed to basic and acidic residues.

In terms of assembly, interacts with RAB35. Interacts with clathrin heavy chain/CLTC. Interacts with components of the adapter protein complex 2 (AP-2) AP2A2 and AP2B1. Interacts with CD3E. Phosphorylated on serine and/or threonine, possibly regulating the guanine nucleotide exchange factor (GEF) activity. Highly expressed in dendritic and natural killer cells and at lower levels in other myeloid lineage cells and in pituitary. Significantly up-regulated in effector memory T-cells as compared with naive T-cells.

The protein localises to the cytoplasm. Its subcellular location is the cytosol. The protein resides in the cytoplasmic vesicle. It is found in the clathrin-coated vesicle. Guanine nucleotide exchange factor (GEF) for RAB35 that acts as a regulator of T-cell receptor (TCR) internalization in TH2 cells. Acts by promoting the exchange of GDP to GTP, converting inactive GDP-bound RAB35 into its active GTP-bound form. Plays a role in clathrin-mediated endocytosis. Controls cytokine production in TH2 lymphocytes by controlling the rate of TCR internalization and routing to endosomes: acts by mediating clathrin-mediated endocytosis of TCR via its interaction with the adapter protein complex 2 (AP-2) and GEF activity. Dysregulation leads to impaired TCR down-modulation and recycling, affecting cytokine production in TH2 cells. This is DENN domain-containing protein 1B from Homo sapiens (Human).